A 663-amino-acid chain; its full sequence is DNA ligase (663 aa).

Residues aspartate 33 to aspartate 37, serine 82 to isoleucine 83, and glutamate 112 contribute to the NAD(+) site. Lysine 114 serves as the catalytic N6-AMP-lysine intermediate. Residues arginine 135, glutamate 171, lysine 285, and lysine 309 each contribute to the NAD(+) site. Residues cysteine 403, cysteine 406, cysteine 419, and cysteine 424 each coordinate Zn(2+). The BRCT domain occupies aspartate 581–serine 663.

Belongs to the NAD-dependent DNA ligase family. LigA subfamily. Requires Mg(2+) as cofactor. Mn(2+) is required as a cofactor.

It carries out the reaction NAD(+) + (deoxyribonucleotide)n-3'-hydroxyl + 5'-phospho-(deoxyribonucleotide)m = (deoxyribonucleotide)n+m + AMP + beta-nicotinamide D-nucleotide.. Functionally, DNA ligase that catalyzes the formation of phosphodiester linkages between 5'-phosphoryl and 3'-hydroxyl groups in double-stranded DNA using NAD as a coenzyme and as the energy source for the reaction. It is essential for DNA replication and repair of damaged DNA. This is DNA ligase from Chlamydia trachomatis serovar D (strain ATCC VR-885 / DSM 19411 / UW-3/Cx).